The sequence spans 55 residues: uncharacterized protein (55 aa).

This is an uncharacterized protein from Escherichia coli (strain K12).